The sequence spans 382 residues: uncharacterized protein (382 aa).

12 consecutive transmembrane segments (helical) span residues 14–34 (GLLL…LWLA), 45–65 (VVSS…GYVI), 79–99 (FIFA…SWLA), 102–122 (FVAG…LMCS), 131–151 (LLAA…LLVS), 157–177 (LMSV…PLLF), 204–224 (LGVN…GLMP), 235–255 (ASIG…QWPI), 270–290 (VQVF…AMAP), 291–311 (ALFI…AWAC), 325–345 (ALLL…AMLM), and 348–368 (FSDN…LLML).

It belongs to the major facilitator superfamily. YcaD (TC 2.A.1.26) family.

It is found in the cell inner membrane. This is an uncharacterized protein from Shigella dysenteriae serotype 1 (strain Sd197).